Here is a 457-residue protein sequence, read N- to C-terminus: Argininosuccinate lyase (457 aa).

The protein belongs to the lyase 1 family. Argininosuccinate lyase subfamily.

The protein resides in the cytoplasm. The catalysed reaction is 2-(N(omega)-L-arginino)succinate = fumarate + L-arginine. The protein operates within amino-acid biosynthesis; L-arginine biosynthesis; L-arginine from L-ornithine and carbamoyl phosphate: step 3/3. This is Argininosuccinate lyase from Salmonella arizonae (strain ATCC BAA-731 / CDC346-86 / RSK2980).